An 86-amino-acid polypeptide reads, in one-letter code: Exodeoxyribonuclease 7 small subunit (86 aa).

Residues 67 to 86 are disordered; the sequence is RVSPASGGATEAPAPAERDR.

It belongs to the XseB family. Heterooligomer composed of large and small subunits.

It is found in the cytoplasm. The enzyme catalyses Exonucleolytic cleavage in either 5'- to 3'- or 3'- to 5'-direction to yield nucleoside 5'-phosphates.. Bidirectionally degrades single-stranded DNA into large acid-insoluble oligonucleotides, which are then degraded further into small acid-soluble oligonucleotides. The chain is Exodeoxyribonuclease 7 small subunit from Beutenbergia cavernae (strain ATCC BAA-8 / DSM 12333 / CCUG 43141 / JCM 11478 / NBRC 16432 / NCIMB 13614 / HKI 0122).